Consider the following 663-residue polypeptide: DNA ligase (663 aa).

Residues 31 to 35 (DFEFD), 80 to 81 (SL), and Glu110 contribute to the NAD(+) site. Residue Lys112 is the N6-AMP-lysine intermediate of the active site. The NAD(+) site is built by Arg133, Glu170, Lys285, and Lys309. 4 residues coordinate Zn(2+): Cys404, Cys407, Cys422, and Cys428. The region spanning 585-663 (FIDNKLAGKT…SEDEFLKMIE (79 aa)) is the BRCT domain.

The protein belongs to the NAD-dependent DNA ligase family. LigA subfamily. Mg(2+) is required as a cofactor. Mn(2+) serves as cofactor.

The enzyme catalyses NAD(+) + (deoxyribonucleotide)n-3'-hydroxyl + 5'-phospho-(deoxyribonucleotide)m = (deoxyribonucleotide)n+m + AMP + beta-nicotinamide D-nucleotide.. DNA ligase that catalyzes the formation of phosphodiester linkages between 5'-phosphoryl and 3'-hydroxyl groups in double-stranded DNA using NAD as a coenzyme and as the energy source for the reaction. It is essential for DNA replication and repair of damaged DNA. The polypeptide is DNA ligase (Azobacteroides pseudotrichonymphae genomovar. CFP2).